The primary structure comprises 544 residues: Chaperonin GroEL (544 aa).

ATP contacts are provided by residues 30 to 33 (TLGP), Lys-51, 87 to 91 (DGTTT), Gly-415, 478 to 480 (NAA), and Asp-494.

It belongs to the chaperonin (HSP60) family. Forms a cylinder of 14 subunits composed of two heptameric rings stacked back-to-back. Interacts with the co-chaperonin GroES.

It is found in the cytoplasm. The catalysed reaction is ATP + H2O + a folded polypeptide = ADP + phosphate + an unfolded polypeptide.. In terms of biological role, together with its co-chaperonin GroES, plays an essential role in assisting protein folding. The GroEL-GroES system forms a nano-cage that allows encapsulation of the non-native substrate proteins and provides a physical environment optimized to promote and accelerate protein folding. This is Chaperonin GroEL from Geobacter sulfurreducens (strain ATCC 51573 / DSM 12127 / PCA).